Reading from the N-terminus, the 682-residue chain is ATP-dependent DNA helicase RecG (682 aa).

The tract at residues 46-139 is wedge domain; the sequence is ELRDLEEVKH…LKNGPHQEDK (94 aa). Residues 271–432 form the Helicase ATP-binding domain; it reads DMSSPYRMNR…VFGEMDVSVI (162 aa). 284–291 serves as a coordination point for ATP; the sequence is GDVGSGKT. The short motif at 385–388 is the DEAH box element; the sequence is DEQH. The region spanning 451–611 is the Helicase C-terminal domain; sequence MLDRILAFVE…GFELSEKDLE (161 aa).

Belongs to the helicase family. RecG subfamily. Monomer. Interacts with SSB (sbbA), via the latter's 6 C-terminal residues. Colocalizes with DNA pol III subunit gamma/tau (dnaX).

The protein localises to the cytoplasm. It localises to the nucleoid. It catalyses the reaction Couples ATP hydrolysis with the unwinding of duplex DNA by translocating in the 3'-5' direction.. The catalysed reaction is ATP + H2O = ADP + phosphate + H(+). Its activity is regulated as follows. Replication fork regression on Holliday junctions (HJ) is inhibited by DisA; DisA inhibits the ATPase activity of RecG. In terms of biological role, critical role in recombination and DNA repair. Helps process Holliday junction intermediates to mature products by catalyzing branch migration. Has a DNA unwinding activity characteristic of a DNA helicase with 3'-5' polarity. Unwinds branched duplex DNA (Y-DNA), Holliday junction (HJ) DNA and partially replicated forks as well as catalyzing fork reversal/regression. Does not seem to unwind R-loops. Inhibits the diadenylate cyclase (DAC) activity of DisA in the presence but not absence of HJ DNA, possibly by relocating DisA from the junction. The sequence is that of ATP-dependent DNA helicase RecG from Bacillus subtilis (strain 168).